Here is a 273-residue protein sequence, read N- to C-terminus: MALKMYRPMTAGLRGRVDLCRAELTARTPEKSLTRGKPAKAGRGAGGRISVRHRGGGHKRRYRDIDFKRDLHDIPGTVKTIEYDPNRSVNIALVFYANGQKRYILAPKGLKVGQQVVSGEKVPLEPANALPLGVIPVGFTVHNVELTIGKGGQIARSAGTRAVIAAKDGGYVMLRLPSGEARLVHRRCYATIGELGNEDHMNTALGKAGRARWRGVRPTVRGMAMNPVDHPLGGGEGRGKGRNPVTPWGQPCRGYKTRKKRRVSDRFIVSKRK.

2 disordered regions span residues 28 to 55 (TPEKSLTRGKPAKAGRGAGGRISVRHRG) and 222 to 273 (GMAM…SKRK). A compositionally biased stretch (basic residues) spans 255 to 273 (YKTRKKRRVSDRFIVSKRK).

It belongs to the universal ribosomal protein uL2 family. Part of the 50S ribosomal subunit. Forms a bridge to the 30S subunit in the 70S ribosome.

One of the primary rRNA binding proteins. Required for association of the 30S and 50S subunits to form the 70S ribosome, for tRNA binding and peptide bond formation. It has been suggested to have peptidyltransferase activity; this is somewhat controversial. Makes several contacts with the 16S rRNA in the 70S ribosome. This Treponema pallidum (strain Nichols) protein is Large ribosomal subunit protein uL2.